Here is a 20-residue protein sequence, read N- to C-terminus: Unknown protein NF040 from 2D-PAGE (20 aa).

The 20-residue stretch at 1–20 (MKVYTDIFTRDEFLSDSYPM) folds into the TCTP domain.

The protein belongs to the TCTP family.

In Naegleria fowleri (Brain eating amoeba), this protein is Unknown protein NF040 from 2D-PAGE.